The following is a 360-amino-acid chain: Beta-1,3-N-acetylglucosaminyltransferase manic fringe (360 aa).

Residues 1-5 are Cytoplasmic-facing; sequence MILRR. Residues 6 to 26 form a helical; Signal-anchor for type II membrane protein membrane-spanning segment; sequence LFHVLPAFAFTLFILVLLDLQ. The Lumenal portion of the chain corresponds to 27 to 360; that stretch reads LRTRSDQKPQ…ALSWNQHVMH (334 aa). The segment at 51–74 is disordered; it reads TTAENQHRDGAHEKEKAEGQKWTE. The segment covering 55–74 has biased composition (basic and acidic residues); that stretch reads NQHRDGAHEKEKAEGQKWTE. Arginine 100 serves as a coordination point for substrate. 2 disulfides stabilise this stretch: cysteine 139–cysteine 150 and cysteine 168–cysteine 231. Substrate is bound at residue aspartate 172. Mn(2+) is bound at residue aspartate 173. Asparagine 214 carries an N-linked (GlcNAc...) asparagine glycan. Aspartate 261 is an active-site residue. Histidine 285 contributes to the Mn(2+) binding site. Cysteine 335 and cysteine 344 are disulfide-bonded.

Belongs to the glycosyltransferase 31 family. It depends on Mn(2+) as a cofactor.

It localises to the golgi apparatus membrane. The enzyme catalyses 3-O-(alpha-L-fucosyl)-L-threonyl-[EGF-like domain protein] + UDP-N-acetyl-alpha-D-glucosamine = 3-O-(N-acetyl-beta-D-glucosaminyl-(1-&gt;3)-alpha-L-fucosyl)-L-threonyl-[EGF-like domain protein] + UDP + H(+). It carries out the reaction 3-O-(alpha-L-fucosyl)-L-seryl-[EGF-like domain protein] + UDP-N-acetyl-alpha-D-glucosamine = 3-O-(N-acetyl-beta-D-glucosaminyl-(1-&gt;3)-alpha-L-fucosyl)-L-seryl-[EGF-like domain protein] + UDP + H(+). In terms of biological role, glycosyltransferase that initiates the elongation of O-linked fucose residues attached to EGF-like repeats in the extracellular domain of Notch molecules. This is Beta-1,3-N-acetylglucosaminyltransferase manic fringe from Danio rerio (Zebrafish).